A 120-amino-acid chain; its full sequence is NAD(P)H-quinone oxidoreductase subunit 3, chloroplastic (120 aa).

3 helical membrane-spanning segments follow: residues 9-29 (IFWAFLLISSVIPILAFLISG), 64-84 (MFALVFVVFDVETVFLYPWAM), and 88-108 (VLGVSVFLEALIFVLILIVGS).

It belongs to the complex I subunit 3 family. In terms of assembly, NDH is composed of at least 16 different subunits, 5 of which are encoded in the nucleus.

The protein resides in the plastid. Its subcellular location is the chloroplast thylakoid membrane. It catalyses the reaction a plastoquinone + NADH + (n+1) H(+)(in) = a plastoquinol + NAD(+) + n H(+)(out). The enzyme catalyses a plastoquinone + NADPH + (n+1) H(+)(in) = a plastoquinol + NADP(+) + n H(+)(out). NDH shuttles electrons from NAD(P)H:plastoquinone, via FMN and iron-sulfur (Fe-S) centers, to quinones in the photosynthetic chain and possibly in a chloroplast respiratory chain. The immediate electron acceptor for the enzyme in this species is believed to be plastoquinone. Couples the redox reaction to proton translocation, and thus conserves the redox energy in a proton gradient. The polypeptide is NAD(P)H-quinone oxidoreductase subunit 3, chloroplastic (Acorus calamus var. americanus (American sweet flag)).